The chain runs to 133 residues: Putative HTH-type transcriptional regulator YwnA (133 aa).

The 130-residue stretch at 1–130 (MINSRLAVAI…ASKSLKDVMN (130 aa)) folds into the HTH rrf2-type domain. Residues 24-47 (SEIIADSVNTNPVVVRRMISLLKK) constitute a DNA-binding region (H-T-H motif).

The chain is Putative HTH-type transcriptional regulator YwnA (ywnA) from Bacillus subtilis (strain 168).